The following is an 89-amino-acid chain: Myrmicitoxin(1)-Pm2a (89 aa).

The first 22 residues, Met1–Cys22, serve as a signal peptide directing secretion. The propeptide occupies Ala23–Pro61. At Asn88 the chain carries Asparagine amide.

It belongs to the formicidae venom clade 1 family. In terms of tissue distribution, expressed by the venom gland.

The protein resides in the secreted. Toxin that potently modulates mammalian voltage-gated sodium (Nav) channels, reducing the voltage threshold for activation and inhibiting channel inactivation. Shows activity on hNav1.6/SCN8A (EC(50)=176 nM), mNav1.7/SCN9A (EC(50)=102 nM) and hNav1.7 (EC(50)=154 nM). In vivo, causes spontaneous, gradual and long-lasting nocifensive behaviors by intraplantar injection in mice, as well as pronounced swelling of the injected paw. Does not have effect on insects (blowflies). This is Myrmicitoxin(1)-Pm2a from Pogonomyrmex maricopa (Maricopa harvester ant).